The primary structure comprises 365 residues: Phosphatidylcholine:ceramide cholinephosphotransferase 2 (365 aa).

The span at 1–14 (MDIIETAKLEEHLE) shows a compositional bias: basic and acidic residues. Residues 1–52 (MDIIETAKLEEHLENQPSDPTNTYTRPTEPVEEENKNGNGKPKSLSSGLRKG) form a disordered region. Over residues 15–26 (NQPSDPTNTYTR) the composition is skewed to polar residues. 5 helical membrane passes run 80–100 (GIAFIYAVFNLVLTTVMITVV), 128–148 (FSVSEINGIILVGLWITQWLF), 159–179 (FCFIIGTLYLYRCITMYVTTL), 218–240 (HILCGDFLFSGHTVTLTLTYLFI), and 248–268 (FWWYHLICWLLSAAGIICILV). H229 is an active-site residue. Active-site residues include H272 and D276. Residues 273–290 (YTVDVIIAYYITTRLFWW) traverse the membrane as a helical segment. Residues 291–365 (YHSMANEKNL…KIGEDNEKST (75 aa)) are Cytoplasmic-facing. 4 S-palmitoyl cysteine lipidation sites follow: C331, C332, C343, and C348.

Belongs to the sphingomyelin synthase family. Palmitoylated on Cys-331, Cys-332, Cys-343 and Cys-348; which plays an important role in plasma membrane localization.

The protein localises to the cell membrane. The protein resides in the golgi apparatus membrane. It catalyses the reaction an N-acylsphing-4-enine + a 1,2-diacyl-sn-glycero-3-phosphocholine = a sphingomyelin + a 1,2-diacyl-sn-glycerol. It carries out the reaction an N-acylsphinganine + a 1,2-diacyl-sn-glycero-3-phosphocholine = an N-acylsphinganine-1-phosphocholine + a 1,2-diacyl-sn-glycerol. The catalysed reaction is an N-acyl-(4R)-4-hydroxysphinganine + a 1,2-diacyl-sn-glycero-3-phosphocholine = an N-acyl-(4R)-4-hydroxysphinganine-phosphocholine + a 1,2-diacyl-sn-glycerol. The enzyme catalyses an N-acylsphing-4-enine + a 1,2-diacyl-sn-glycero-3-phosphoethanolamine = an N-acylsphing-4-enine 1-phosphoethanolamine + a 1,2-diacyl-sn-glycerol. It catalyses the reaction an N-acylsphinganine + a 1,2-diacyl-sn-glycero-3-phosphoethanolamine = an N-acylsphinganine-1-phosphoethanolamine + a 1,2-diacyl-sn-glycerol. It carries out the reaction an N-acyl-(4R)-4-hydroxysphinganine + a 1,2-diacyl-sn-glycero-3-phosphoethanolamine = an N-acyl-(4R)-4-hydroxysphinganine-1-phosphoethanolamine + a 1,2-diacyl-sn-glycerol. The catalysed reaction is 1,2-dihexadecanoyl-sn-glycero-3-phosphocholine + an N-acylsphing-4-enine = 1,2-dihexadecanoyl-sn-glycerol + a sphingomyelin. The enzyme catalyses 1-(9Z-octadecenoyl)-2-acyl-sn-3-glycerol + a sphingomyelin = a 1-(9Z-octadecenoyl)-2-acyl-sn-glycero-3-phosphocholine + an N-acylsphing-4-enine. It catalyses the reaction N-hexadecanoylsphinganine + a 1,2-diacyl-sn-glycero-3-phosphocholine = N-hexadecanoyl-sphinganine-1-phosphocholine + a 1,2-diacyl-sn-glycerol. It carries out the reaction N-hexadecanoyl-(4R)-hydroxysphinganine + a 1,2-diacyl-sn-glycero-3-phosphocholine = N-hexadecanoyl-(4R)-hydroxysphinganine-phosphocholine + a 1,2-diacyl-sn-glycerol. The catalysed reaction is N-hexadecanoylsphinganine + a 1,2-diacyl-sn-glycero-3-phosphoethanolamine = N-hexadecanoyl-sphinganine-1-phosphoethanolamine + a 1,2-diacyl-sn-glycerol. The enzyme catalyses N-hexadecanoyl-(4R)-hydroxysphinganine + a 1,2-diacyl-sn-glycero-3-phosphoethanolamine = N-hexadecanoyl-(4R)-hydroxysphinganine-1-phosphoethanolamine + a 1,2-diacyl-sn-glycerol. Its pathway is sphingolipid metabolism. Its function is as follows. Sphingomyelin synthase that primarily contributes to sphingomyelin synthesis and homeostasis at the plasma membrane. Catalyzes the reversible transfer of phosphocholine moiety in sphingomyelin biosynthesis: in the forward reaction transfers phosphocholine head group of phosphatidylcholine (PC) on to ceramide (CER) to form ceramide phosphocholine (sphingomyelin, SM) and diacylglycerol (DAG) as by-product, and in the reverse reaction transfers phosphocholine from SM to DAG to form PC and CER. The direction of the reaction appears to depend on the levels of CER and DAG in the plasma membrane. Does not use free phosphorylcholine or CDP-choline as donors. Can also transfer phosphoethanolamine head group of phosphatidylethanolamine (PE) on to ceramide (CER) to form ceramide phosphoethanolamine (CPE). Regulates receptor-mediated signal transduction via mitogenic DAG and proapoptotic CER, as well as via SM, a structural component of membrane rafts that serve as platforms for signal transduction and protein sorting. To a lesser extent, plays a role in secretory transport via regulation of DAG pool at the Golgi apparatus and its downstream effects on PRKD1. Required for normal bone matrix mineralization. This is Phosphatidylcholine:ceramide cholinephosphotransferase 2 (SGMS2) from Macaca fascicularis (Crab-eating macaque).